The chain runs to 1562 residues: E3 ubiquitin-protein ligase listerin (1562 aa).

HEAT repeat units lie at residues 41 to 78, 127 to 164, 175 to 217, 262 to 301, 304 to 348, 495 to 532, 555 to 592, 813 to 850, 908 to 945, 997 to 1037, 1047 to 1085, 1188 to 1226, 1263 to 1298, and 1299 to 1339; these read SLYS…DFNQ, KFLK…KDPA, EQLL…SAVL, ETVL…ITSK, LKVC…VSRT, SAIS…FLDS, STYQ…VALS, IRYA…DYNC, YYSR…KTVR, FKSL…WLDS, TVRL…DSLS, INQS…SDVD, NSFI…KEAG, and LINR…NFSP. An RING-type zinc finger spans residues 1508 to 1555; that stretch reads CAICYSILHAVDRKLPSKTCPTCKNKFHGACLYKWFRSSGNNTCPLCR.

Belongs to the LTN1 family. Component of the ribosome quality control complex (RQC), composed of the E3 ubiquitin ligase RKR1/LTN1, RQC1 and RQC2, as well as CDC48 and its ubiquitin-binding cofactors associated with the 60S ribosomal subunits.

The protein resides in the nucleus. It localises to the cytoplasm. It is found in the cytosol. It catalyses the reaction S-ubiquitinyl-[E2 ubiquitin-conjugating enzyme]-L-cysteine + [acceptor protein]-L-lysine = [E2 ubiquitin-conjugating enzyme]-L-cysteine + N(6)-ubiquitinyl-[acceptor protein]-L-lysine.. The protein operates within protein modification; protein ubiquitination. In terms of biological role, E3 ubiquitin-protein ligase component of the ribosome quality control complex (RQC), a ribosome-associated complex that mediates ubiquitination and extraction of incompletely synthesized nascent chains for proteasomal degradation. Mediates ubiquitination of proteins derived from mRNAs lacking stop codons (non-stop proteins) and other translation arrest products induced by poly-lysine sequences and tandem rare codons. Ubiquitination leads to CDC48 recruitment for extraction and degradation of the incomplete translation product. May indirectly play a role in chromatin function and transcription. This Saccharomyces cerevisiae (strain ATCC 204508 / S288c) (Baker's yeast) protein is E3 ubiquitin-protein ligase listerin.